Consider the following 503-residue polypeptide: Probable cytosol aminopeptidase (503 aa).

Residues K270 and D275 each contribute to the Mn(2+) site. The active site involves K282. Mn(2+)-binding residues include D293, D352, and E354. R356 is an active-site residue.

It belongs to the peptidase M17 family. It depends on Mn(2+) as a cofactor.

The protein localises to the cytoplasm. It catalyses the reaction Release of an N-terminal amino acid, Xaa-|-Yaa-, in which Xaa is preferably Leu, but may be other amino acids including Pro although not Arg or Lys, and Yaa may be Pro. Amino acid amides and methyl esters are also readily hydrolyzed, but rates on arylamides are exceedingly low.. It carries out the reaction Release of an N-terminal amino acid, preferentially leucine, but not glutamic or aspartic acids.. Its function is as follows. Presumably involved in the processing and regular turnover of intracellular proteins. Catalyzes the removal of unsubstituted N-terminal amino acids from various peptides. This is Probable cytosol aminopeptidase from Shigella dysenteriae serotype 1 (strain Sd197).